We begin with the raw amino-acid sequence, 427 residues long: Serine--tRNA ligase (427 aa).

An L-serine-binding site is contributed by 229-231 (TAE). 260 to 262 (RSE) contacts ATP. Glu-283 contacts L-serine. Residue 347 to 350 (EISS) coordinates ATP. Ser-383 contacts L-serine.

This sequence belongs to the class-II aminoacyl-tRNA synthetase family. Type-1 seryl-tRNA synthetase subfamily. As to quaternary structure, homodimer. The tRNA molecule binds across the dimer.

It localises to the cytoplasm. It carries out the reaction tRNA(Ser) + L-serine + ATP = L-seryl-tRNA(Ser) + AMP + diphosphate + H(+). The catalysed reaction is tRNA(Sec) + L-serine + ATP = L-seryl-tRNA(Sec) + AMP + diphosphate + H(+). The protein operates within aminoacyl-tRNA biosynthesis; selenocysteinyl-tRNA(Sec) biosynthesis; L-seryl-tRNA(Sec) from L-serine and tRNA(Sec): step 1/1. Catalyzes the attachment of serine to tRNA(Ser). Is also able to aminoacylate tRNA(Sec) with serine, to form the misacylated tRNA L-seryl-tRNA(Sec), which will be further converted into selenocysteinyl-tRNA(Sec). The polypeptide is Serine--tRNA ligase (Nitrosococcus oceani (strain ATCC 19707 / BCRC 17464 / JCM 30415 / NCIMB 11848 / C-107)).